The sequence spans 84 residues: RNA-binding protein Hfq (84 aa).

One can recognise a Sm domain in the interval Asp-9 to Val-68.

Belongs to the Hfq family. Homohexamer.

Its function is as follows. RNA chaperone that binds small regulatory RNA (sRNAs) and mRNAs to facilitate mRNA translational regulation in response to envelope stress, environmental stress and changes in metabolite concentrations. Also binds with high specificity to tRNAs. In Azotobacter vinelandii (strain DJ / ATCC BAA-1303), this protein is RNA-binding protein Hfq.